The chain runs to 76 residues: MTIEELKSAISFGNSDLNIFTISENVVSFVSSSHKRKGVRGSCLYKARPAVSAARLRRLRSPCGILSSVSQTILSV.

The protein is Putative protein StbC (stbC) of Escherichia coli.